The chain runs to 91 residues: Small ribosomal subunit protein uS19 (91 aa).

Belongs to the universal ribosomal protein uS19 family.

Protein S19 forms a complex with S13 that binds strongly to the 16S ribosomal RNA. The protein is Small ribosomal subunit protein uS19 of Hahella chejuensis (strain KCTC 2396).